A 409-amino-acid chain; its full sequence is Transforming growth factor beta-3 proprotein (409 aa).

The first 21 residues, 1-21, serve as a signal peptide directing secretion; it reads MHLQRALVVLALLNFATVSLS. N-linked (GlcNAc...) asparagine glycosylation is found at Asn72, Asn133, and Asn140. The Cell attachment site signature appears at 259–261; sequence RGD. Cystine bridges form between Cys304–Cys313, Cys312–Cys375, Cys341–Cys406, and Cys345–Cys408.

It belongs to the TGF-beta family. As to quaternary structure, interacts with ASPN. Latency-associated peptide: Homodimer; disulfide-linked. Latency-associated peptide: Interacts with Transforming growth factor beta-3 (TGF-beta-3) chain; interaction is non-covalent and maintains (TGF-beta-3) in a latent state. Latency-associated peptide: Interacts with LRRC32/GARP; leading to regulate activation of TGF-beta-3 and promote epithelial fusion during palate development. Latency-associated peptide: Interacts (via cell attachment site) with integrins, leading to release of the active TGF-beta-3. Transforming growth factor beta-3: Homodimer; disulfide-linked. Transforming growth factor beta-3: Interacts with TGF-beta receptors (TGFBR1 and TGFBR2), leading to signal transduction. Transforming growth factor beta-3 proprotein: The precursor proprotein is cleaved in the Golgi apparatus to form Transforming growth factor beta-3 (TGF-beta-3) and Latency-associated peptide (LAP) chains, which remain non-covalently linked, rendering TGF-beta-3 inactive.

The protein resides in the secreted. The protein localises to the extracellular space. It is found in the extracellular matrix. Its function is as follows. Transforming growth factor beta-3 proprotein: Precursor of the Latency-associated peptide (LAP) and Transforming growth factor beta-3 (TGF-beta-3) chains, which constitute the regulatory and active subunit of TGF-beta-3, respectively. In terms of biological role, required to maintain the Transforming growth factor beta-3 (TGF-beta-3) chain in a latent state during storage in extracellular matrix. Associates non-covalently with TGF-beta-3 and regulates its activation via interaction with 'milieu molecules', such as LTBP1 and LRRC32/GARP, that control activation of TGF-beta-3. Interaction with integrins results in distortion of the Latency-associated peptide chain and subsequent release of the active TGF-beta-3. Transforming growth factor beta-3: Multifunctional protein that regulates embryogenesis and cell differentiation and is required in various processes such as secondary palate development. Activation into mature form follows different steps: following cleavage of the proprotein in the Golgi apparatus, Latency-associated peptide (LAP) and Transforming growth factor beta-3 (TGF-beta-3) chains remain non-covalently linked rendering TGF-beta-3 inactive during storage in extracellular matrix. At the same time, LAP chain interacts with 'milieu molecules', such as LTBP1 and LRRC32/GARP that control activation of TGF-beta-3 and maintain it in a latent state during storage in extracellular milieus. TGF-beta-3 is released from LAP by integrins: integrin-binding results in distortion of the LAP chain and subsequent release of the active TGF-beta-3. Once activated following release of LAP, TGF-beta-3 acts by binding to TGF-beta receptors (TGFBR1 and TGFBR2), which transduce signal. The sequence is that of Transforming growth factor beta-3 proprotein (TGFB3) from Sus scrofa (Pig).